The following is a 359-amino-acid chain: Threonine dehydratase biosynthetic, chloroplastic (359 aa).

2 consecutive ACT-like domains span residues 184-256 and 278-349; these read ALLA…NFSH and IFGE…LDNS.

This sequence belongs to the serine/threonine dehydratase family. As to quaternary structure, homotetramer. The cofactor is pyridoxal 5'-phosphate. Floral buds of untreated plants. After ABA treatment or mechanical wounding is mostly accumulated in leaves, to a lesser extent in stems, but not in roots. Expressed in anthers, carpel leaves, pith cells, sepals and petals. Not expressed in stomium, vascular bundles, epidermal cells or pollen mother cells.

Its subcellular location is the plastid. It localises to the chloroplast. It catalyses the reaction L-threonine = 2-oxobutanoate + NH4(+). It participates in amino-acid biosynthesis; L-isoleucine biosynthesis; 2-oxobutanoate from L-threonine: step 1/1. The sequence is that of Threonine dehydratase biosynthetic, chloroplastic from Solanum tuberosum (Potato).